The chain runs to 104 residues: ATP synthase subunit c (104 aa).

The next 2 membrane-spanning stretches (helical) occupy residues 31-51 (SVVA…IGMG) and 75-95 (MFIA…VAMI).

It belongs to the ATPase C chain family. As to quaternary structure, F-type ATPases have 2 components, F(1) - the catalytic core - and F(0) - the membrane proton channel. F(1) has five subunits: alpha(3), beta(3), gamma(1), delta(1), epsilon(1). F(0) has three main subunits: a(1), b(2) and c(10-14). The alpha and beta chains form an alternating ring which encloses part of the gamma chain. F(1) is attached to F(0) by a central stalk formed by the gamma and epsilon chains, while a peripheral stalk is formed by the delta and b chains.

It is found in the cell inner membrane. F(1)F(0) ATP synthase produces ATP from ADP in the presence of a proton or sodium gradient. F-type ATPases consist of two structural domains, F(1) containing the extramembraneous catalytic core and F(0) containing the membrane proton channel, linked together by a central stalk and a peripheral stalk. During catalysis, ATP synthesis in the catalytic domain of F(1) is coupled via a rotary mechanism of the central stalk subunits to proton translocation. Functionally, key component of the F(0) channel; it plays a direct role in translocation across the membrane. A homomeric c-ring of between 10-14 subunits forms the central stalk rotor element with the F(1) delta and epsilon subunits. The chain is ATP synthase subunit c from Aliarcobacter butzleri (strain RM4018) (Arcobacter butzleri).